Here is a 204-residue protein sequence, read N- to C-terminus: Signal peptidase I (204 aa).

Topologically, residues 1-10 (MNSFKNFLKE) are cytoplasmic. Residues 11–30 (WGLFLLILSLLALSRIFFWS) traverse the membrane as a helical segment. At 31–204 (NVRVEGHSMD…LWPITRIGTF (174 aa)) the chain is on the extracellular side. Active-site residues include Ser38 and Lys76.

It belongs to the peptidase S26 family.

The protein resides in the cell membrane. It carries out the reaction Cleavage of hydrophobic, N-terminal signal or leader sequences from secreted and periplasmic proteins.. The chain is Signal peptidase I (lepB) from Streptococcus pneumoniae serotype 4 (strain ATCC BAA-334 / TIGR4).